The chain runs to 148 residues: MQISINELNFDDDSYQYMELLKQLTYIDPSIITNEMFEKQLSIIKNNPFHKIIVAKIDGKIVGSTTVLIEPKFIHNLSSVGHIEDVVVDQNYRLHGIGKLLIVKAIDICRQERCYKIILDCSDKVCGFYCKLGFTPKEKQMALYLNGK.

An N-acetyltransferase domain is found at 3 to 148; the sequence is ISINELNFDD…KQMALYLNGK (146 aa). Residues Thr25, 72–75, and 84–86 contribute to the substrate site; these read KFIH and EDV. Acetyl-CoA is bound by residues 86–88 and 94–99; these read VVV and LHGIGK. Residues 115–116 and Asp120 each bind substrate; that span reads YK. An acetyl-CoA-binding site is contributed by 129–131; the sequence is YCK. A substrate-binding site is contributed by Glu138.

This sequence belongs to the acetyltransferase family. GNA1 subfamily.

The enzyme catalyses D-glucosamine 6-phosphate + acetyl-CoA = N-acetyl-D-glucosamine 6-phosphate + CoA + H(+). Its pathway is nucleotide-sugar biosynthesis; UDP-N-acetyl-alpha-D-glucosamine biosynthesis; N-acetyl-alpha-D-glucosamine 1-phosphate from alpha-D-glucosamine 6-phosphate (route I): step 1/2. The chain is Probable glucosamine 6-phosphate N-acetyltransferase from Acanthamoeba polyphaga (Amoeba).